Consider the following 299-residue polypeptide: Mitochondrial magnesium exporter 1 (299 aa).

3 Solcar repeats span residues 12–103 (SNPV…GKRL), 112–200 (LTYP…LQEL), and 210–296 (ISTT…TNDL). The next 4 membrane-spanning stretches (helical) occupy residues 79–99 (ISAP…VYAA), 114–134 (YPQI…VTVP), 216–236 (ILSG…FDVL), and 272–292 (ILPI…GVEL).

Belongs to the mitochondrial carrier (TC 2.A.29) family.

Its subcellular location is the mitochondrion membrane. Its function is as follows. Mediates efflux of magnesium ions from mitochondria, suggesting a role in magnesium homeostasis. This chain is Mitochondrial magnesium exporter 1, found in Drosophila melanogaster (Fruit fly).